A 160-amino-acid polypeptide reads, in one-letter code: NAD(P)H-quinone oxidoreductase subunit I, chloroplastic (160 aa).

4Fe-4S ferredoxin-type domains are found at residues Gly55 to Lys84 and Leu95 to Glu124. Positions 64, 67, 70, 74, 104, 107, 110, and 114 each coordinate [4Fe-4S] cluster.

The protein belongs to the complex I 23 kDa subunit family. As to quaternary structure, NDH is composed of at least 16 different subunits, 5 of which are encoded in the nucleus. It depends on [4Fe-4S] cluster as a cofactor.

It localises to the plastid. The protein resides in the chloroplast thylakoid membrane. It catalyses the reaction a plastoquinone + NADH + (n+1) H(+)(in) = a plastoquinol + NAD(+) + n H(+)(out). It carries out the reaction a plastoquinone + NADPH + (n+1) H(+)(in) = a plastoquinol + NADP(+) + n H(+)(out). Its function is as follows. NDH shuttles electrons from NAD(P)H:plastoquinone, via FMN and iron-sulfur (Fe-S) centers, to quinones in the photosynthetic chain and possibly in a chloroplast respiratory chain. The immediate electron acceptor for the enzyme in this species is believed to be plastoquinone. Couples the redox reaction to proton translocation, and thus conserves the redox energy in a proton gradient. The sequence is that of NAD(P)H-quinone oxidoreductase subunit I, chloroplastic from Cucumis sativus (Cucumber).